The chain runs to 1387 residues: Kinesin-like protein KIF15 (1387 aa).

Positions 1–23 (MAPGCKSELRNVTNSHSNQPSNE) are disordered. The span at 10-22 (RNVTNSHSNQPSN) shows a compositional bias: polar residues. Residues 26-363 (AIKVFVRIRP…LNFAQRAKLI (338 aa)) form the Kinesin motor domain. 109–116 (GQTGSGKT) provides a ligand contact to ATP. Residues 368–1132 (VVNEDTQGNV…LKMRQLEHVM (765 aa)) adopt a coiled-coil conformation. Residue Ser568 is modified to Phosphoserine. Lys1009 bears the N6-acetyllysine mark. A phosphoserine mark is found at Ser1141 and Ser1169.

It belongs to the TRAFAC class myosin-kinesin ATPase superfamily. Kinesin family. KLP2 subfamily. As to quaternary structure, interacts with MKI67 and TPX2. Expressed in brain (neurons in the external germinal layer of the cerebellum and in ventricular zones) (at protein level). Expressed in spleen and testis.

Its subcellular location is the cytoplasm. It localises to the cytoskeleton. The protein resides in the spindle. Functionally, plus-end directed kinesin-like motor enzyme involved in mitotic spindle assembly. This Mus musculus (Mouse) protein is Kinesin-like protein KIF15 (Kif15).